The sequence spans 301 residues: Probable aspartoacylase (301 aa).

Zn(2+) contacts are provided by His13 and Glu16. Residues Arg54 and 61–62 (NR) contribute to the substrate site. A Zn(2+)-binding site is contributed by His105. Substrate contacts are provided by Glu163 and Tyr273.

It belongs to the AspA/AstE family. Aspartoacylase subfamily. Zn(2+) serves as cofactor.

The catalysed reaction is an N-acyl-L-aspartate + H2O = a carboxylate + L-aspartate. In Prochlorococcus marinus (strain MIT 9301), this protein is Probable aspartoacylase.